The primary structure comprises 194 residues: uncharacterized protein (194 aa).

The tract at residues 62–93 (GGAGRRTSKAQRVHPQPSHQRQPPPPQHPGPY) is disordered.

Expressed most abundantly in the brain at protein level. Present in cortex, cerebellum and midbrain. Found in neurons. Elevated expressions detected in Alzheimer brain samples. Also expressed in testis.

The protein localises to the cytoplasm. This is an uncharacterized protein from Homo sapiens (Human).